Here is a 559-residue protein sequence, read N- to C-terminus: Aspartokinase 3, chloroplastic (559 aa).

The N-terminal 85 residues, 1 to 85, are a transit peptide targeting the chloroplast; it reads MAASMQFYGV…LNKTEKKLTC (85 aa). ATP contacts are provided by Lys-88, Gly-91, and Ser-120. Substrate is bound at residue Glu-204. 2 consecutive ACT domains span residues 402–480 and 481–559; these read ITST…SIIS and LIGN…AASS.

Belongs to the aspartokinase family. In terms of tissue distribution, highly expressed in xylem of leaves and hypocotyls, stele of roots and in trichomes after bolting. Weak expression in veins and mesophyll cells of caulone leaves, inflorescence stems, sepals, petals and stigmata.

Its subcellular location is the plastid. The protein localises to the chloroplast. The catalysed reaction is L-aspartate + ATP = 4-phospho-L-aspartate + ADP. The protein operates within amino-acid biosynthesis; L-lysine biosynthesis via DAP pathway; (S)-tetrahydrodipicolinate from L-aspartate: step 1/4. It functions in the pathway amino-acid biosynthesis; L-methionine biosynthesis via de novo pathway; L-homoserine from L-aspartate: step 1/3. It participates in amino-acid biosynthesis; L-threonine biosynthesis; L-threonine from L-aspartate: step 1/5. Its activity is regulated as follows. Allosterically inhibited by lysine, but not by S-adenosyl-L-methionine (SAM). K(0.5) for lysine in the presence of physiological concentrations of substrates is 7.4 uM. No inhibition by threonine or leucine and no activation or inhibition by alanine, cysteine, isoleucine, serine, valine, methionine, glutamine, asparagine, glutamic acid or arginine. Its function is as follows. Involved in the first step of essential amino acids lysine, threonine, methionine and isoleucine synthesis via the aspartate-family pathway. The chain is Aspartokinase 3, chloroplastic (AK3) from Arabidopsis thaliana (Mouse-ear cress).